The following is a 585-amino-acid chain: Nitrogen permease regulator 3-like protein (585 aa).

Residues 117–157 (GEWAKRRKPRTTVESNASSSHLVSKPESSHPSTGSFEVKSS) are disordered. A compositionally biased stretch (polar residues) spans 128–138 (TVESNASSSHL). Low complexity predominate over residues 148 to 157 (STGSFEVKSS).

This sequence belongs to the NPR3 family.

In Schizosaccharomyces pombe (strain 972 / ATCC 24843) (Fission yeast), this protein is Nitrogen permease regulator 3-like protein.